The sequence spans 174 residues: Gamma-crystallin C (174 aa).

Beta/gamma crystallin 'Greek key' domains are found at residues 2 to 40 (GKITFYEDRAFQGRSYETTTDCPNLQPYFSRCNSIRVES) and 41 to 83 (GCWM…CLIP). Residue cysteine 23 is modified to S-methylcysteine. A connecting peptide region spans residues 84–87 (QTVS). Beta/gamma crystallin 'Greek key' domains lie at 88–128 (HRLR…HVLE) and 129–171 (GCWV…RRVV).

It belongs to the beta/gamma-crystallin family. In terms of assembly, monomer.

In terms of biological role, crystallins are the dominant structural components of the vertebrate eye lens. This is Gamma-crystallin C (CRYGC) from Homo sapiens (Human).